A 472-amino-acid polypeptide reads, in one-letter code: UDP-N-acetylmuramate--L-alanine ligase (472 aa).

121–127 (GTHGKTT) is an ATP binding site.

It belongs to the MurCDEF family.

It is found in the cytoplasm. The catalysed reaction is UDP-N-acetyl-alpha-D-muramate + L-alanine + ATP = UDP-N-acetyl-alpha-D-muramoyl-L-alanine + ADP + phosphate + H(+). It functions in the pathway cell wall biogenesis; peptidoglycan biosynthesis. Functionally, cell wall formation. This Hahella chejuensis (strain KCTC 2396) protein is UDP-N-acetylmuramate--L-alanine ligase.